Consider the following 117-residue polypeptide: Immunoglobulin kappa variable 9-129 (117 aa).

Residues 1–22 (MDMRAPAQVFGFLLLWFPGARC) form the signal peptide. Residues 23–45 (DIQMTQSPSSLSASLGERVSLTC) are framework-1. A disulfide bond links Cys-45 and Cys-110. The tract at residues 46-56 (RASQDIHGYLN) is complementarity-determining-1. Residues 57–71 (LFQQKPGETIKHLIY) form a framework-2 region. The segment at 72–78 (ETSNLDS) is complementarity-determining-2. Residues 79–110 (GVPKRFSGSRSGSDYSLIIGSLESEDFADYYC) are framework-3. Residues 111–117 (LQYASSP) form a complementarity-determining-3 region.

The sequence is that of Immunoglobulin kappa variable 9-129 from Mus musculus (Mouse).